The chain runs to 190 residues: Holliday junction branch migration complex subunit RuvA (190 aa).

The tract at residues 1–64 (MIGKLTGTLL…EDAQLLYGFG (64 aa)) is domain I. Residues 65-137 (TAQERQAFRE…LKGKLGADVG (73 aa)) form a domain II region. A flexible linker region spans residues 137-141 (GVRAH). Positions 142–190 (AANDNQADILQALLALGYNDKEAAAALKALPADVGVSEGIKLALKSLSK) are domain III.

Belongs to the RuvA family. Homotetramer. Forms an RuvA(8)-RuvB(12)-Holliday junction (HJ) complex. HJ DNA is sandwiched between 2 RuvA tetramers; dsDNA enters through RuvA and exits via RuvB. An RuvB hexamer assembles on each DNA strand where it exits the tetramer. Each RuvB hexamer is contacted by two RuvA subunits (via domain III) on 2 adjacent RuvB subunits; this complex drives branch migration. In the full resolvosome a probable DNA-RuvA(4)-RuvB(12)-RuvC(2) complex forms which resolves the HJ.

It localises to the cytoplasm. Functionally, the RuvA-RuvB-RuvC complex processes Holliday junction (HJ) DNA during genetic recombination and DNA repair, while the RuvA-RuvB complex plays an important role in the rescue of blocked DNA replication forks via replication fork reversal (RFR). RuvA specifically binds to HJ cruciform DNA, conferring on it an open structure. The RuvB hexamer acts as an ATP-dependent pump, pulling dsDNA into and through the RuvAB complex. HJ branch migration allows RuvC to scan DNA until it finds its consensus sequence, where it cleaves and resolves the cruciform DNA. This chain is Holliday junction branch migration complex subunit RuvA, found in Acidovorax ebreus (strain TPSY) (Diaphorobacter sp. (strain TPSY)).